Consider the following 165-residue polypeptide: Protein SprT (165 aa).

Residues 20-163 form the SprT-like domain; it reads EKLAQANLKL…RCVHCGEQLV (144 aa). H78 serves as a coordination point for Zn(2+). E79 is a catalytic residue. Zn(2+) is bound at residue H82.

The protein belongs to the SprT family. Zn(2+) serves as cofactor.

The protein localises to the cytoplasm. The protein is Protein SprT of Shigella boydii serotype 18 (strain CDC 3083-94 / BS512).